The chain runs to 459 residues: tRNA modification GTPase MnmE (459 aa).

(6S)-5-formyl-5,6,7,8-tetrahydrofolate is bound by residues R22, E85, and R124. The 160-residue stretch at 221-380 folds into the TrmE-type G domain; sequence GLSTVIVGKP…LEIQIRDLFF (160 aa). N231 is a binding site for K(+). GTP is bound by residues 231–236, 250–256, and 275–278; these read NVGKSS, TEVAGTT, and DTAG. S235 lines the Mg(2+) pocket. The K(+) site is built by T250, V252, and T255. T256 contributes to the Mg(2+) binding site. (6S)-5-formyl-5,6,7,8-tetrahydrofolate is bound at residue K459.

It belongs to the TRAFAC class TrmE-Era-EngA-EngB-Septin-like GTPase superfamily. TrmE GTPase family. As to quaternary structure, homodimer. Heterotetramer of two MnmE and two MnmG subunits. It depends on K(+) as a cofactor.

The protein localises to the cytoplasm. Exhibits a very high intrinsic GTPase hydrolysis rate. Involved in the addition of a carboxymethylaminomethyl (cmnm) group at the wobble position (U34) of certain tRNAs, forming tRNA-cmnm(5)s(2)U34. This chain is tRNA modification GTPase MnmE, found in Staphylococcus aureus (strain USA300 / TCH1516).